We begin with the raw amino-acid sequence, 440 residues long: 5-hydroxytryptamine receptor 6 (440 aa).

Residues M1–G27 are Extracellular-facing. Residues W28–C52 traverse the membrane as a helical segment. The Cytoplasmic segment spans residues T53 to N62. A helical membrane pass occupies residues F63–L88. Residues Y89–R96 are Extracellular-facing. The chain crosses the membrane as a helical span at residues G97–L122. C99 and C180 form a disulfide bridge. Residue D106 coordinates serotonin. The Cytoplasmic portion of the chain corresponds to D123–R142. The helical transmembrane segment at A143–H167 threads the bilayer. Over E168 to S185 the chain is Extracellular. A helical membrane pass occupies residues L186–C209. The Cytoplasmic segment spans residues R210–A266. A helical transmembrane segment spans residues S267–V293. A serotonin-binding site is contributed by N288. Topologically, residues C294–P299 are extracellular. The helical transmembrane segment at G300–F323 threads the bilayer. Residues M324–N440 are Cytoplasmic-facing. The interval A346–L392 is disordered. Polar residues predominate over residues S347–S358. The span at P362–P371 shows a compositional bias: low complexity.

The protein belongs to the G-protein coupled receptor 1 family. In terms of assembly, interacts with MTOR, RPTOR and NF1. Interacts with CDK5.

The protein localises to the cell membrane. In terms of biological role, G-protein coupled receptor for 5-hydroxytryptamine (serotonin), a biogenic hormone that functions as a neurotransmitter, a hormone and a mitogen. Also has a high affinity for tricyclic psychotropic drugs. Ligand binding causes a conformation change that triggers signaling via guanine nucleotide-binding proteins (G proteins) and modulates the activity of downstream effectors. HTR6 is coupled to G(s) G alpha proteins and mediates activation of adenylate cyclase activity. Controls pyramidal neurons migration during corticogenesis, through the regulation of CDK5 activity. Is an activator of mTOR signaling. The polypeptide is 5-hydroxytryptamine receptor 6 (HTR6) (Pan troglodytes (Chimpanzee)).